An 883-amino-acid polypeptide reads, in one-letter code: Phosphoenolpyruvate carboxylase (883 aa).

Residues H138 and K546 contribute to the active site.

The protein belongs to the PEPCase type 1 family. Mg(2+) is required as a cofactor.

The catalysed reaction is oxaloacetate + phosphate = phosphoenolpyruvate + hydrogencarbonate. In terms of biological role, forms oxaloacetate, a four-carbon dicarboxylic acid source for the tricarboxylic acid cycle. This chain is Phosphoenolpyruvate carboxylase, found in Escherichia coli O7:K1 (strain IAI39 / ExPEC).